Reading from the N-terminus, the 357-residue chain is Dual-specificity RNA methyltransferase RlmN (357 aa).

Catalysis depends on Glu89, which acts as the Proton acceptor. The Radical SAM core domain occupies 109–340; sequence EGEKYTVCVS…CTIRESKALD (232 aa). A disulfide bridge links Cys116 with Cys345. 3 residues coordinate [4Fe-4S] cluster: Cys123, Cys127, and Cys130. S-adenosyl-L-methionine-binding positions include 173-174, Ser203, 226-228, and Asn302; these read GE and SLH. Residue Cys345 is the S-methylcysteine intermediate of the active site.

This sequence belongs to the radical SAM superfamily. RlmN family. The cofactor is [4Fe-4S] cluster.

It localises to the cytoplasm. It catalyses the reaction adenosine(2503) in 23S rRNA + 2 reduced [2Fe-2S]-[ferredoxin] + 2 S-adenosyl-L-methionine = 2-methyladenosine(2503) in 23S rRNA + 5'-deoxyadenosine + L-methionine + 2 oxidized [2Fe-2S]-[ferredoxin] + S-adenosyl-L-homocysteine. The enzyme catalyses adenosine(37) in tRNA + 2 reduced [2Fe-2S]-[ferredoxin] + 2 S-adenosyl-L-methionine = 2-methyladenosine(37) in tRNA + 5'-deoxyadenosine + L-methionine + 2 oxidized [2Fe-2S]-[ferredoxin] + S-adenosyl-L-homocysteine. Functionally, specifically methylates position 2 of adenine 2503 in 23S rRNA and position 2 of adenine 37 in tRNAs. m2A2503 modification seems to play a crucial role in the proofreading step occurring at the peptidyl transferase center and thus would serve to optimize ribosomal fidelity. This Helicobacter pylori (strain P12) protein is Dual-specificity RNA methyltransferase RlmN.